The following is a 153-amino-acid chain: MAHPLIPAILDLARPIADDLDLEVVQAVFHTNQSPPILRLDIRSRVGDTGLEDCERMSRSFELALDEANIIPDAYVLEISSPGLSDTLESDRDFLSFKGFPVQVTSRSPNDDTVEQQGTLLGRDADSVYLNKRGRTVRIARSQVLEVKLIEQL.

The protein belongs to the RimP family.

The protein resides in the cytoplasm. In terms of biological role, required for maturation of 30S ribosomal subunits. The chain is Ribosome maturation factor RimP from Synechococcus elongatus (strain ATCC 33912 / PCC 7942 / FACHB-805) (Anacystis nidulans R2).